We begin with the raw amino-acid sequence, 409 residues long: Sulfide-quinone reductase (409 aa).

FAD is bound by residues 8 to 12, 34 to 35, and Cys129; these read GGRFG and NK. The active-site Cysteine persulfide intermediate is Cys178. Residues Asn271, Asp307, and Gly317 each coordinate FAD. Cys350 functions as the Cysteine persulfide intermediate in the catalytic mechanism.

Belongs to the SQRD family. As to quaternary structure, monomer. FAD serves as cofactor.

Its subcellular location is the membrane. The enzyme catalyses n a quinone + n hydrogen sulfide + n H(+) = polysulfur(n-2) + n a quinol. Its activity is regulated as follows. Inhibited by the quinone analog 2-heptyl-4-hydroxyquinolone N-oxide (HQNO). Inactivated by iodoacetamide treatment. Inhibited by KCN. In terms of biological role, catalyzes the oxidation of sulfides, such as hydrogen sulfide, with the help of a quinone. Has the highest activity with caldariella quinone and decylubiquinone, and lower activity with naphtoquinones. Consecutive reaction cycles lead to the accumulation of a polysulfide product on the active site Cys residues; these products are released when they exceed a critical length, typically as cyclooctasulfur. The protein is Sulfide-quinone reductase of Acidianus ambivalens (Desulfurolobus ambivalens).